A 410-amino-acid chain; its full sequence is Centromere protein U (410 aa).

Positions 1 to 72 (MAARRSLRYS…YETFDPPLHS (72 aa)) are disordered. The Nuclear localization signal signature appears at 4–21 (RRSLRYSGDPGAKRSRNT). The span at 28-38 (RKQKAGQKPKR) shows a compositional bias: basic residues. Phosphothreonine; by PLK1 is present on Thr-73. The disordered stretch occupies residues 87 to 228 (SSTSPATHRG…THSDASESMH (142 aa)). The span at 101-115 (NLNPSENEASGNDSI) shows a compositional bias: polar residues. Residues Ser-105, Ser-110, Ser-114, Ser-130, Ser-133, and Ser-135 each carry the phosphoserine modification. The span at 138 to 149 (DNVRRSVSIERP) shows a compositional bias: basic and acidic residues. Residues 158-169 (PAAASSSSSPSE) are compositionally biased toward low complexity. A Glycyl lysine isopeptide (Lys-Gly) (interchain with G-Cter in SUMO2) cross-link involves residue Lys-179. A Phosphoserine modification is found at Ser-186. Thr-191 carries the post-translational modification Phosphothreonine. The span at 200 to 218 (TQKKVRPSPGRRKRPRRGS) shows a compositional bias: basic residues. Phosphoserine is present on Ser-224. Residues 289-352 (QMLKALKRKN…LKNSKHFLSN (64 aa)) adopt a coiled-coil conformation. A Nuclear localization signal motif is present at residues 295–312 (KRKNTKIISNMEKKRQRL).

The protein belongs to the CENP-U/AME1 family. Component of the CENPA-NAC complex, at least composed of CENPA, CENPC, CENPH, CENPM, CENPN, CENPT and CENPU. The CENPA-NAC complex interacts with the CENPA-CAD complex, composed of CENPI, CENPK, CENPL, CENPO, CENPP, CENPQ, CENPR and CENPS. Interacts with MLF1. In terms of processing, phosphorylated by PLK1 at Thr-73, creating a self-tethering site that specifically interacts with the polo-box domain of PLK1. Expressed at high levels in glioblastoma cell lines. Up-regulated in GBM (glioblastoma multiforme) tumors. Significantly increased in both the tumor core as well as the contralateral striatum and cortex in gliomas.

Its subcellular location is the cytoplasm. The protein resides in the nucleus. The protein localises to the chromosome. It is found in the centromere. It localises to the kinetochore. In terms of biological role, component of the CENPA-NAC (nucleosome-associated) complex, a complex that plays a central role in assembly of kinetochore proteins, mitotic progression and chromosome segregation. The CENPA-NAC complex recruits the CENPA-CAD (nucleosome distal) complex and may be involved in incorporation of newly synthesized CENPA into centromeres. Plays an important role in the correct PLK1 localization to the mitotic kinetochores. A scaffold protein responsible for the initial recruitment and maintenance of the kinetochore PLK1 population until its degradation. Involved in transcriptional repression. This Rattus norvegicus (Rat) protein is Centromere protein U (Cenpu).